Reading from the N-terminus, the 438-residue chain is Acid phosphatase type 7 (438 aa).

Residues 1–23 form the signal peptide; sequence MSPFLGGWLFFCMLLPFSPGVQG. Fe cation is bound by residues D141, D170, and Y173. Zn(2+) is bound at residue D170. N205 serves as a coordination point for Zn(2+). N-linked (GlcNAc...) asparagine glycosylation occurs at N211. Zn(2+) contacts are provided by H286 and H333. Fe cation is bound at residue H335. Residues N350 and N404 are each glycosylated (N-linked (GlcNAc...) asparagine).

The protein belongs to the metallophosphoesterase superfamily. Purple acid phosphatase family. Fe cation serves as cofactor. It depends on Zn(2+) as a cofactor.

It is found in the secreted. The enzyme catalyses a phosphate monoester + H2O = an alcohol + phosphate. This chain is Acid phosphatase type 7, found in Mus musculus (Mouse).